We begin with the raw amino-acid sequence, 514 residues long: 2-isopropylmalate synthase (514 aa).

Residues 5-268 (LIIFDTTLRD…DVGIDTSQIV (264 aa)) form the Pyruvate carboxyltransferase domain. Asp-14, His-202, His-204, and Asn-239 together coordinate Mn(2+). The segment at 395–514 (KFVSLSQHSE…KDDKVNPQRS (120 aa)) is regulatory domain.

The protein belongs to the alpha-IPM synthase/homocitrate synthase family. LeuA type 1 subfamily. In terms of assembly, homodimer. It depends on Mn(2+) as a cofactor.

It is found in the cytoplasm. The catalysed reaction is 3-methyl-2-oxobutanoate + acetyl-CoA + H2O = (2S)-2-isopropylmalate + CoA + H(+). It functions in the pathway amino-acid biosynthesis; L-leucine biosynthesis; L-leucine from 3-methyl-2-oxobutanoate: step 1/4. Its function is as follows. Catalyzes the condensation of the acetyl group of acetyl-CoA with 3-methyl-2-oxobutanoate (2-ketoisovalerate) to form 3-carboxy-3-hydroxy-4-methylpentanoate (2-isopropylmalate). The protein is 2-isopropylmalate synthase of Burkholderia lata (strain ATCC 17760 / DSM 23089 / LMG 22485 / NCIMB 9086 / R18194 / 383).